The following is a 235-amino-acid chain: Glucosamine-6-phosphate deaminase (235 aa).

Asp62 acts as the Proton acceptor; for enolization step in catalysis. The active-site For ring-opening step is the Asn128. The Proton acceptor; for ring-opening step role is filled by His130. The For ring-opening step role is filled by Glu135.

It belongs to the glucosamine/galactosamine-6-phosphate isomerase family. NagB subfamily.

It catalyses the reaction alpha-D-glucosamine 6-phosphate + H2O = beta-D-fructose 6-phosphate + NH4(+). It participates in amino-sugar metabolism; N-acetylneuraminate degradation; D-fructose 6-phosphate from N-acetylneuraminate: step 5/5. In terms of biological role, catalyzes the reversible isomerization-deamination of glucosamine 6-phosphate (GlcN6P) to form fructose 6-phosphate (Fru6P) and ammonium ion. The polypeptide is Glucosamine-6-phosphate deaminase (Latilactobacillus sakei subsp. sakei (strain 23K) (Lactobacillus sakei subsp. sakei)).